A 198-amino-acid chain; its full sequence is Holliday junction branch migration complex subunit RuvA (198 aa).

The domain I stretch occupies residues 1–64; that stretch reads MYEYIKGEYM…EDFIGLYGFE (64 aa). The tract at residues 65-143 is domain II; it reads SLEELEMFKM…TDELLNCIDE (79 aa). Residues 144–154 are flexible linker; sequence FDDVTQDNSLA. Residues 154-198 are domain III; sequence AVSEALSALISLGYTEKEAEKVLRDVDKSESVENIIKSALVKLMG.

This sequence belongs to the RuvA family. Homotetramer. Forms an RuvA(8)-RuvB(12)-Holliday junction (HJ) complex. HJ DNA is sandwiched between 2 RuvA tetramers; dsDNA enters through RuvA and exits via RuvB. An RuvB hexamer assembles on each DNA strand where it exits the tetramer. Each RuvB hexamer is contacted by two RuvA subunits (via domain III) on 2 adjacent RuvB subunits; this complex drives branch migration. In the full resolvosome a probable DNA-RuvA(4)-RuvB(12)-RuvC(2) complex forms which resolves the HJ.

The protein resides in the cytoplasm. In terms of biological role, the RuvA-RuvB-RuvC complex processes Holliday junction (HJ) DNA during genetic recombination and DNA repair, while the RuvA-RuvB complex plays an important role in the rescue of blocked DNA replication forks via replication fork reversal (RFR). RuvA specifically binds to HJ cruciform DNA, conferring on it an open structure. The RuvB hexamer acts as an ATP-dependent pump, pulling dsDNA into and through the RuvAB complex. HJ branch migration allows RuvC to scan DNA until it finds its consensus sequence, where it cleaves and resolves the cruciform DNA. This Clostridium botulinum (strain Eklund 17B / Type B) protein is Holliday junction branch migration complex subunit RuvA.